Consider the following 479-residue polypeptide: tRNA modification GTPase MnmE (479 aa).

R25, E82, and K134 together coordinate (6S)-5-formyl-5,6,7,8-tetrahydrofolate. The region spanning 230 to 401 (GLRVVIAGQP…LRAALLARAG (172 aa)) is the TrmE-type G domain. Residue N240 participates in K(+) binding. Residues 240–245 (NAGKSS), 259–265 (TPIPGTT), 284–287 (DTAG), 352–355 (NKAD), and 382–384 (SAR) contribute to the GTP site. S244 serves as a coordination point for Mg(2+). K(+)-binding residues include T259, I261, and T264. Residue T265 coordinates Mg(2+). Residue K479 coordinates (6S)-5-formyl-5,6,7,8-tetrahydrofolate.

Belongs to the TRAFAC class TrmE-Era-EngA-EngB-Septin-like GTPase superfamily. TrmE GTPase family. As to quaternary structure, homodimer. Heterotetramer of two MnmE and two MnmG subunits. K(+) serves as cofactor.

Its subcellular location is the cytoplasm. In terms of biological role, exhibits a very high intrinsic GTPase hydrolysis rate. Involved in the addition of a carboxymethylaminomethyl (cmnm) group at the wobble position (U34) of certain tRNAs, forming tRNA-cmnm(5)s(2)U34. This is tRNA modification GTPase MnmE from Leptothrix cholodnii (strain ATCC 51168 / LMG 8142 / SP-6) (Leptothrix discophora (strain SP-6)).